Here is a 338-residue protein sequence, read N- to C-terminus: GDSL esterase/lipase At5g63170 (338 aa).

The first 23 residues, 1–23 (MNSLVIQTTIVLVSVISVSIVHA), serve as a signal peptide directing secretion. S35 acts as the Nucleophile in catalysis. Residues D313 and H316 contribute to the active site.

The protein belongs to the 'GDSL' lipolytic enzyme family.

The protein resides in the secreted. This Arabidopsis thaliana (Mouse-ear cress) protein is GDSL esterase/lipase At5g63170.